We begin with the raw amino-acid sequence, 55 residues long: Cytochrome c oxidase subunit 7s (55 aa).

The helical transmembrane segment at 13 to 35 (LVQDIGVALILGSIAGCFFKYGV) threads the bilayer.

Slime mold cytochrome c oxidase consists of at least seven different polypeptides species, subunits I, II, III, IV, V, VI, and VIIe/s in order of MW.

It localises to the mitochondrion inner membrane. It carries out the reaction 4 Fe(II)-[cytochrome c] + O2 + 8 H(+)(in) = 4 Fe(III)-[cytochrome c] + 2 H2O + 4 H(+)(out). This protein is one of the nuclear-coded polypeptide chains of cytochrome c oxidase, the terminal oxidase in mitochondrial electron transport. In Dictyostelium discoideum (Social amoeba), this protein is Cytochrome c oxidase subunit 7s (cxgS).